The sequence spans 430 residues: Histidinol dehydrogenase (430 aa).

Tyr130, Gln191, and Asn214 together coordinate NAD(+). 3 residues coordinate substrate: Ser237, Gln259, and His262. Zn(2+)-binding residues include Gln259 and His262. Residues Glu327 and His328 each act as proton acceptor in the active site. Positions 328, 361, 415, and 420 each coordinate substrate. Asp361 contributes to the Zn(2+) binding site. His420 is a binding site for Zn(2+).

This sequence belongs to the histidinol dehydrogenase family. Requires Zn(2+) as cofactor.

The catalysed reaction is L-histidinol + 2 NAD(+) + H2O = L-histidine + 2 NADH + 3 H(+). It functions in the pathway amino-acid biosynthesis; L-histidine biosynthesis; L-histidine from 5-phospho-alpha-D-ribose 1-diphosphate: step 9/9. Its function is as follows. Catalyzes the sequential NAD-dependent oxidations of L-histidinol to L-histidinaldehyde and then to L-histidine. The protein is Histidinol dehydrogenase of Brucella suis biovar 1 (strain 1330).